A 133-amino-acid chain; its full sequence is MSCRLLLYVSLCLVETALMNTKITQSPRYLILGRANKSLECEQHLGHNAMYWYKQSAEKPPELMFLYNLKQLIRNETVPSRFIPECPDSSKLLLHISAVDPEDSAVYFCASSHGQGVSGNTLYFGEGSRLIVV.

The first 21 residues, 1–21 (MSCRLLLYVSLCLVETALMNT), serve as a signal peptide directing secretion. Residues 22-113 (KITQSPRYLI…SAVYFCASSH (92 aa)) form a v segment region. Residues Asn36 and Asn75 are each glycosylated (N-linked (GlcNAc...) asparagine). A disulfide bridge connects residues Cys41 and Cys109. The tract at residues 114–133 (GQGVSGNTLYFGEGSRLIVV) is j segment.

This Mus musculus (Mouse) protein is T-cell receptor beta chain V region 86T1.